The sequence spans 705 residues: Kinesin-like protein KIF2A (705 aa).

A globular region spans residues 1-216; the sequence is MATANFGKIQ…LDYRPLTTAD (216 aa). The tract at residues 65-186 is disordered; the sequence is DLVPDEDIEP…QELREKRAQD (122 aa). At S75 the chain carries Phosphoserine. Phosphothreonine is present on T96. K101 carries the post-translational modification N6-acetyllysine. Positions 122 to 139 are enriched in polar residues; the sequence is LPEQSSSAQQNGSVSDIS. 2 positions are modified to phosphoserine: S134 and S139. Residues 158–186 are compositionally biased toward basic and acidic residues; it reads CVKEVEKLQEKREKRRLQQQELREKRAQD. Residues 222–552 enclose the Kinesin motor domain; that stretch reads RICVCVRKRP…LRYANRVKEL (331 aa). 312 to 319 is an ATP binding site; the sequence is GQTGSGKT. A phosphoserine mark is found at T528 and Y545. Positions 659–698 form a coiled coil; that stretch reads ATQLEAILEQKIDILTELRDKVKSFRAALQEEEQASKQIN.

Belongs to the TRAFAC class myosin-kinesin ATPase superfamily. Kinesin family. MCAK/KIF2 subfamily. In terms of assembly, interacts with AURKA and PLK1. Interacts with PSRC1. Interacts with MCRS1; the interaction enhances recruitment of KIF2A to the minus ends of spindle microtubules which promotes chromosome alignment. Highest level in lung. High level in ovary, moderate levels in heart, kidney, placenta, skeletal muscle and spleen (at protein level). Pancreas and spleen express a shorter isoform (at protein level). Expressed in the flagellum of elongated spermatids and sperm in the testis lumen (at protein level). Isoform 1 expressed in neuronal cells. Isoform 2 expressed in astrocytes and fibroblasts.

The protein resides in the cytoplasm. Its subcellular location is the cytoskeleton. It is found in the microtubule organizing center. It localises to the centrosome. The protein localises to the spindle pole. The protein resides in the spindle. Its subcellular location is the lysosome. Plus end-directed microtubule-dependent motor required for normal brain development. May regulate microtubule dynamics during axonal growth. Required for normal progression through mitosis. Required for normal congress of chromosomes at the metaphase plate. Required for normal spindle dynamics during mitosis. Promotes spindle turnover. Implicated in formation of bipolar mitotic spindles. Has microtubule depolymerization activity. This is Kinesin-like protein KIF2A (Kif2a) from Mus musculus (Mouse).